Reading from the N-terminus, the 557-residue chain is Formate--tetrahydrofolate ligase (557 aa).

An ATP-binding site is contributed by 65-72 (SPAGEGKT).

It belongs to the formate--tetrahydrofolate ligase family.

The enzyme catalyses (6S)-5,6,7,8-tetrahydrofolate + formate + ATP = (6R)-10-formyltetrahydrofolate + ADP + phosphate. Its pathway is one-carbon metabolism; tetrahydrofolate interconversion. This chain is Formate--tetrahydrofolate ligase, found in Methylobacillus flagellatus (strain ATCC 51484 / DSM 6875 / VKM B-1610 / KT).